A 752-amino-acid polypeptide reads, in one-letter code: Reticulon-1-B (752 aa).

4 disordered regions span residues 1 to 57 (MAAN…TSTD), 264 to 319 (EYPG…SEKQ), 334 to 424 (KAKE…SPSI), and 444 to 465 (ESCDGSSASEESPKRDPDSPMM). Residues 264–273 (EYPGNQQGKS) show a composition bias toward polar residues. A compositionally biased stretch (basic and acidic residues) spans 334–361 (KAKEGTKRFSSETNDEKQSRSFHAEKQD). Residues 363 to 383 (TVMSTEATSASHYTKASSAES) show a composition bias toward polar residues. The Reticulon domain maps to 566–752 (AIDLLYWRDV…AKIPGTKQKE (187 aa)). The next 2 helical transmembrane spans lie at 580–600 (IVFGSILLMLFSLTLFSVVSV) and 684–704 (VLMWLLTYVGALFNGLTLLIM).

As to expression, isoform A and isoform C are both expressed in the animal hemisphere (presumptive neural ectoderm) of blastula and gastrula stage embryos, and along the anterior neural border, in the panplacodal primordium, and in the dorsolateral side of archenteron roof of late neurula embryos. At the tailbud stage, expression of the isoforms begin to differ. Isoform A localizes to the cranial placodes including the trigeminal placode, lateral line placode, olfactory placode and otic vesicle. Isoform C localizes to the central nervous system, including the spinal cord, prosencephalon, mesencephalon and rhombencephalon, as well as the lateral line placode, otic vesicle and pronephros.

The protein localises to the endoplasmic reticulum membrane. Its subcellular location is the nucleus. Functionally, inhibits amyloid precursor protein processing, probably by blocking BACE1 activity. In Xenopus laevis (African clawed frog), this protein is Reticulon-1-B (rtn1-b).